The following is a 693-amino-acid chain: Elongation factor G (693 aa).

A tr-type G domain is found at 8 to 284 (DMTRNVGIMA…AIVNYMPAPT (277 aa)). GTP contacts are provided by residues 17 to 24 (AHIDAGKT), 81 to 85 (DTPGH), and 135 to 138 (NKMD).

The protein belongs to the TRAFAC class translation factor GTPase superfamily. Classic translation factor GTPase family. EF-G/EF-2 subfamily.

The protein localises to the cytoplasm. Its function is as follows. Catalyzes the GTP-dependent ribosomal translocation step during translation elongation. During this step, the ribosome changes from the pre-translocational (PRE) to the post-translocational (POST) state as the newly formed A-site-bound peptidyl-tRNA and P-site-bound deacylated tRNA move to the P and E sites, respectively. Catalyzes the coordinated movement of the two tRNA molecules, the mRNA and conformational changes in the ribosome. This Fusobacterium nucleatum subsp. nucleatum (strain ATCC 25586 / DSM 15643 / BCRC 10681 / CIP 101130 / JCM 8532 / KCTC 2640 / LMG 13131 / VPI 4355) protein is Elongation factor G.